The primary structure comprises 204 residues: Tat proofreading chaperone DmsD (204 aa).

It belongs to the TorD/DmsD family. DmsD subfamily.

In terms of biological role, required for biogenesis/assembly of DMSO reductase, but not for the interaction of the DmsA signal peptide with the Tat system. May be part of a chaperone cascade complex that facilitates a folding-maturation pathway for the substrate protein. The polypeptide is Tat proofreading chaperone DmsD (Salmonella typhi).